Consider the following 147-residue polypeptide: Endoribonuclease YbeY (147 aa).

Zn(2+)-binding residues include His-109, His-113, and His-119.

The protein belongs to the endoribonuclease YbeY family. Zn(2+) is required as a cofactor.

It is found in the cytoplasm. Its function is as follows. Single strand-specific metallo-endoribonuclease involved in late-stage 70S ribosome quality control and in maturation of the 3' terminus of the 16S rRNA. This chain is Endoribonuclease YbeY, found in Magnetococcus marinus (strain ATCC BAA-1437 / JCM 17883 / MC-1).